A 375-amino-acid chain; its full sequence is Hydrogenase-1 small chain (375 aa).

Positions 1–47 form a signal peptide, tat-type signal; sequence MNTNNEETFYQAMRRKGVSRRSFLKYCSLAATSLGLGAAMTPRIAWA. 8 residues coordinate [4Fe-4S] cluster: Cys64, Cys67, Cys162, Cys196, His234, Cys237, Cys262, and Cys268. Residues Cys277, Cys296, and Cys299 each contribute to the [3Fe-4S] cluster site. The tract at residues 353-375 is disordered; the sequence is HNRHKQQLADAGQQSPDNEDKQA.

Belongs to the [NiFe]/[NiFeSe] hydrogenase small subunit family. As to quaternary structure, heterodimer of a large and a small subunit. [4Fe-4S] cluster serves as cofactor. [3Fe-4S] cluster is required as a cofactor. Post-translationally, predicted to be exported by the Tat system. The position of the signal peptide cleavage has not been experimentally proven.

The protein resides in the cell membrane. The enzyme catalyses H2 + A = AH2. This Citrobacter freundii protein is Hydrogenase-1 small chain (hyaA).